Reading from the N-terminus, the 314-residue chain is Probable 2-(5''-triphosphoribosyl)-3'-dephosphocoenzyme-A synthase (314 aa).

It belongs to the CitG/MdcB family.

It catalyses the reaction 3'-dephospho-CoA + ATP = 2'-(5''-triphospho-alpha-D-ribosyl)-3'-dephospho-CoA + adenine. The protein is Probable 2-(5''-triphosphoribosyl)-3'-dephosphocoenzyme-A synthase of Photobacterium profundum (strain SS9).